We begin with the raw amino-acid sequence, 344 residues long: WW domain binding protein 1-like (344 aa).

A helical membrane pass occupies residues 42–62 (LWWFWLVWTIIIILSCCCVCH). Disordered stretches follow at residues 132-250 (LLPP…RFTG) and 302-321 (CLSSEGQAREHGHPHLPRPP). Residues 145–173 (PGADQPQGSQGAQSSPLSGPSRSSTRPPS) are compositionally biased toward low complexity. Position 173 is a phosphoserine (serine 173). Positions 212 to 228 (LDRDSECKEELLKDSSS) are enriched in basic and acidic residues.

The protein localises to the membrane. This Rattus norvegicus (Rat) protein is WW domain binding protein 1-like (Wbp1l).